The chain runs to 464 residues: tRNA-2-methylthio-N(6)-dimethylallyladenosine synthase (464 aa).

Residues 19-135 (GSYWITTFGC…LENLLGKVDL (117 aa)) form the MTTase N-terminal domain. [4Fe-4S] cluster-binding residues include Cys28, Cys64, Cys98, Cys170, Cys174, and Cys177. One can recognise a Radical SAM core domain in the interval 156-394 (RESSICGWVN…DLVEKTARSR (239 aa)). Residues 396-464 (KRYINNIESV…PFSLTGELYL (69 aa)) form the TRAM domain.

The protein belongs to the methylthiotransferase family. MiaB subfamily. In terms of assembly, monomer. [4Fe-4S] cluster serves as cofactor.

Its subcellular location is the cytoplasm. The enzyme catalyses N(6)-dimethylallyladenosine(37) in tRNA + (sulfur carrier)-SH + AH2 + 2 S-adenosyl-L-methionine = 2-methylsulfanyl-N(6)-dimethylallyladenosine(37) in tRNA + (sulfur carrier)-H + 5'-deoxyadenosine + L-methionine + A + S-adenosyl-L-homocysteine + 2 H(+). Its function is as follows. Catalyzes the methylthiolation of N6-(dimethylallyl)adenosine (i(6)A), leading to the formation of 2-methylthio-N6-(dimethylallyl)adenosine (ms(2)i(6)A) at position 37 in tRNAs that read codons beginning with uridine. The chain is tRNA-2-methylthio-N(6)-dimethylallyladenosine synthase from Prochlorococcus marinus (strain AS9601).